We begin with the raw amino-acid sequence, 414 residues long: Succinylornithine transaminase (414 aa).

Lys-260 is subject to N6-(pyridoxal phosphate)lysine.

This sequence belongs to the class-III pyridoxal-phosphate-dependent aminotransferase family. AstC subfamily. Requires pyridoxal 5'-phosphate as cofactor.

It carries out the reaction N(2)-succinyl-L-ornithine + 2-oxoglutarate = N-succinyl-L-glutamate 5-semialdehyde + L-glutamate. Its pathway is amino-acid degradation; L-arginine degradation via AST pathway; L-glutamate and succinate from L-arginine: step 3/5. Functionally, catalyzes the transamination of N(2)-succinylornithine and alpha-ketoglutarate into N(2)-succinylglutamate semialdehyde and glutamate. Can also act as an acetylornithine aminotransferase. In Yersinia pseudotuberculosis serotype O:1b (strain IP 31758), this protein is Succinylornithine transaminase.